Here is a 526-residue protein sequence, read N- to C-terminus: D-arabinono-1,4-lactone oxidase (526 aa).

The 175-residue stretch at 19-193 folds into the FAD-binding PCMH-type domain; it reads YSAKPERYFQ…VSATIRVVPG (175 aa). H56 is subject to Pros-8alpha-FAD histidine.

This sequence belongs to the oxygen-dependent FAD-linked oxidoreductase family. In terms of assembly, monomer. Requires FAD as cofactor. The N-terminus is blocked.

The protein resides in the mitochondrion membrane. It carries out the reaction D-arabinono-1,4-lactone + O2 = dehydro-D-arabinono-1,4-lactone + H2O2 + H(+). Its pathway is cofactor biosynthesis; D-erythroascorbate biosynthesis; dehydro-D-arabinono-1,4-lactone from D-arabinose: step 2/2. Its function is as follows. Can oxidize L-gulono-1,4-lactone as well as D-arabinono-1,4-lactone and L-galactono-1,4-lactone. The protein is D-arabinono-1,4-lactone oxidase (ALO1) of Saccharomyces cerevisiae (strain ATCC 204508 / S288c) (Baker's yeast).